The chain runs to 290 residues: O-methyltransferase agiB (290 aa).

D155 serves as a coordination point for S-adenosyl-L-methionine. The active-site Proton acceptor is H194.

Belongs to the class I-like SAM-binding methyltransferase superfamily. Cation-independent O-methyltransferase family.

Its pathway is secondary metabolite biosynthesis. In terms of biological role, O-methyltransferase; part of the gene cluster that mediates the biosynthesis of the aspergillicins A and F, 2 cryptic cyclic hexa-depsipeptides. The hexamodular NRPS agiA catalyzes the condensation of the six amino acid residues including N-Me-L-O-Me-tyrosine, L-proline 1, L-proline 2, D-isoleucine, O-acetyl-threonine, and L-isoleucine. The starting condensation domain (C1) of agiA probably loads acetyl-CoA which is condensed on the N-terminus of threonine by the first module to yield O-acetyl-threonine. The second module then loads L-isoleucine. The epimerase (E) domain on module 2 is probably involved in the formation of the D-isoleucine moiety. Modules 3 and 4 further load 2 successive L-prolines. Module 5 is then involved in the condensation of O-Me-L-tyrosine produced by the O-methyltransferase agiB and the N-methyl transferase (NMeT) domain on module 5 probably catalyzes the N-methylation to yield the N-Me-L-O-Me-tyrosine moiety. The A domain of module 5 loads preferentially O-Me-L-tyrosine, but it can also accept L-phenylalanine, which leads to the production of aspergillicin G. Module 6 then loads the last residue, L-isoleucine. The C-terminal thiolesterase (TE) domain probably cyclizes the peptide using the hydroxy group from threonine to form the cyclic depsipeptide. The sequence is that of O-methyltransferase agiB from Aspergillus flavus (strain ATCC 200026 / FGSC A1120 / IAM 13836 / NRRL 3357 / JCM 12722 / SRRC 167).